Consider the following 148-residue polypeptide: 3-dehydroquinate dehydratase (148 aa).

Tyr-22 (proton acceptor) is an active-site residue. Positions 73, 79, and 86 each coordinate substrate. His-99 functions as the Proton donor in the catalytic mechanism. Substrate-binding positions include 100-101 and Arg-110; that span reads LS.

Belongs to the type-II 3-dehydroquinase family. Homododecamer.

The enzyme catalyses 3-dehydroquinate = 3-dehydroshikimate + H2O. Its pathway is metabolic intermediate biosynthesis; chorismate biosynthesis; chorismate from D-erythrose 4-phosphate and phosphoenolpyruvate: step 3/7. Its function is as follows. Catalyzes a trans-dehydration via an enolate intermediate. This Prochlorococcus marinus (strain MIT 9211) protein is 3-dehydroquinate dehydratase.